The following is a 92-amino-acid chain: Small ribosomal subunit protein uS19c (92 aa).

The protein belongs to the universal ribosomal protein uS19 family.

It is found in the plastid. The protein resides in the chloroplast. Protein S19 forms a complex with S13 that binds strongly to the 16S ribosomal RNA. This Lemna minor (Common duckweed) protein is Small ribosomal subunit protein uS19c.